The chain runs to 204 residues: Tat proofreading chaperone DmsD (204 aa).

This sequence belongs to the TorD/DmsD family. DmsD subfamily.

Its function is as follows. Required for biogenesis/assembly of DMSO reductase, but not for the interaction of the DmsA signal peptide with the Tat system. May be part of a chaperone cascade complex that facilitates a folding-maturation pathway for the substrate protein. This is Tat proofreading chaperone DmsD from Escherichia coli O6:H1 (strain CFT073 / ATCC 700928 / UPEC).